The following is a 588-amino-acid chain: Adenine deaminase (588 aa).

This sequence belongs to the metallo-dependent hydrolases superfamily. Adenine deaminase family. Homodimer. It depends on Mn(2+) as a cofactor.

It carries out the reaction adenine + H2O + H(+) = hypoxanthine + NH4(+). The polypeptide is Adenine deaminase (Escherichia coli O17:K52:H18 (strain UMN026 / ExPEC)).